Consider the following 135-residue polypeptide: Transcription antitermination protein NusB (135 aa).

This sequence belongs to the NusB family.

Functionally, involved in transcription antitermination. Required for transcription of ribosomal RNA (rRNA) genes. Binds specifically to the boxA antiterminator sequence of the ribosomal RNA (rrn) operons. In Wolinella succinogenes (strain ATCC 29543 / DSM 1740 / CCUG 13145 / JCM 31913 / LMG 7466 / NCTC 11488 / FDC 602W) (Vibrio succinogenes), this protein is Transcription antitermination protein NusB.